The following is a 163-amino-acid chain: Large ribosomal subunit protein uL11 (163 aa).

Belongs to the universal ribosomal protein uL11 family. In terms of assembly, part of the ribosomal stalk of the 50S ribosomal subunit. Interacts with L10 and the large rRNA to form the base of the stalk. L10 forms an elongated spine to which L12 dimers bind in a sequential fashion forming a multimeric L10(L12)X complex.

Functionally, forms part of the ribosomal stalk which helps the ribosome interact with GTP-bound translation factors. This chain is Large ribosomal subunit protein uL11, found in Thermococcus onnurineus (strain NA1).